Reading from the N-terminus, the 341-residue chain is Inactive caspase-12 (341 aa).

A CARD domain is found at 1 to 92 (MADEKPSNGV…QLSSDISSDG (92 aa)). Phosphoserine occurs at positions 85 and 90. Catalysis depends on residues H172 and C220.

The protein belongs to the peptidase C14A family. In terms of tissue distribution, widely expressed, with highest levels in lung.

May function as a negative regulator of inflammatory responses and innate immunity. May reduce cytokine release in response to bacterial lipopolysaccharide during infection. Reduces activation of NF-kappa-B in response to TNF. May lack protease activity. This chain is Inactive caspase-12 (CASP12), found in Homo sapiens (Human).